The following is a 363-amino-acid chain: RNA exonuclease NGL1 (363 aa).

The transit peptide at 1 to 23 directs the protein to the mitochondrion; that stretch reads MFTRRFIPVVQSTKQNIGKYVRK.

The protein belongs to the CCR4/nocturin family.

The protein resides in the mitochondrion. In Saccharomyces cerevisiae (strain ATCC 204508 / S288c) (Baker's yeast), this protein is RNA exonuclease NGL1 (NGL1).